A 561-amino-acid chain; its full sequence is Lipase maturation factor 1 (561 aa).

The disordered stretch occupies residues 1–32 (MAAPRESLRRRKAGAGDPEPEAPPGQGRDLKG). At 1–42 (MAAPRESLRRRKAGAGDPEPEAPPGQGRDLKGRPARLRAGTF) the chain is on the cytoplasmic side. Residues 43-65 (WLTRIVLLRALAFVYFVAFLVAF) form a helical membrane-spanning segment. Over 66-120 (HQNKQLIGDRGLLPCRAYLQSVQRHFGGRVSWDALSYAPTILWLLDWSHMDANLD) the chain is Lumenal. Residues 121 to 144 (ALALLGLGISSFILVSGCANMVLM) form a helical membrane-spanning segment. The Cytoplasmic portion of the chain corresponds to 145–200 (AALWVLYMSLVNVGQIWYSFGWESQLLETGFLGIFLCPLWTLSALPRGTPTSWVVM). Residues 201-214 (WGFRWLIFRIMLGA) traverse the membrane as a helical segment. Residues 215–285 (GLIKIRGDRC…LGRRMCIVHG (71 aa)) are Lumenal-facing. Residues 286–314 (ALQVLFQVVLIISGNLSFLNWLTIVPSLA) form a helical membrane-spanning segment. The Cytoplasmic segment spans residues 315–360 (CFDDATLGGLFPSGPGRLKDQVLKIQEEETRGARAPRTRGSVARGT). A helical membrane pass occupies residues 361–382 (VNLALGILVAWLSIPVVLNLLS). At 383 to 561 (PRQVMNSSFN…SRQWPYPEPE (179 aa)) the chain is on the lumenal side.

Belongs to the lipase maturation factor family. In terms of assembly, interacts with LPL and SEL1L.

It is found in the endoplasmic reticulum membrane. Functionally, involved in the maturation of specific proteins in the endoplasmic reticulum. Required for maturation and transport of active lipoprotein lipase (LPL) through the secretory pathway. Each LMF1 molecule chaperones 50 or more molecules of LPL. This is Lipase maturation factor 1 (LMF1) from Bos taurus (Bovine).